The chain runs to 25 residues: Flagellar filament core protein flaB3 (25 aa).

This sequence belongs to the bacterial flagellin family. As to quaternary structure, the flagellum consists of an outer layer composed of two sheath proteins, flaA1 (44 kDa) and flaA2 (35 kDa) around a core that contains three proteins flaB1 (37 kDa), flaB2 (34 kDa) and flaB3 (32 kDa).

It is found in the periplasmic flagellum. The protein resides in the periplasm. In terms of biological role, component of the core of the flagella. The polypeptide is Flagellar filament core protein flaB3 (flaB3) (Brachyspira hyodysenteriae (Treponema hyodysenteriae)).